The following is a 426-amino-acid chain: DUF724 domain-containing protein 9 (426 aa).

Polar residues-rich tracts occupy residues glutamate 164–glutamate 184 and proline 213–aspartate 222. The tract at residues glutamate 164–serine 248 is disordered. The segment covering serine 223–serine 242 has biased composition (basic and acidic residues). In terms of domain architecture, DUF724 spans leucine 256–proline 425. The stretch at alanine 370–serine 402 forms a coiled coil.

Expressed in flowers.

Its subcellular location is the nucleus. Its function is as follows. May be involved in the polar growth of plant cells via transportation of RNAs. In Arabidopsis thaliana (Mouse-ear cress), this protein is DUF724 domain-containing protein 9.